The primary structure comprises 205 residues: Adenylyl-sulfate kinase (205 aa).

Position 31–38 (31–38 (GLSGAGKS)) interacts with ATP. Residue Ser-105 is the Phosphoserine intermediate of the active site.

This sequence belongs to the APS kinase family.

It carries out the reaction adenosine 5'-phosphosulfate + ATP = 3'-phosphoadenylyl sulfate + ADP + H(+). It participates in sulfur metabolism; hydrogen sulfide biosynthesis; sulfite from sulfate: step 2/3. In terms of biological role, catalyzes the synthesis of activated sulfate. The sequence is that of Adenylyl-sulfate kinase from Shewanella oneidensis (strain ATCC 700550 / JCM 31522 / CIP 106686 / LMG 19005 / NCIMB 14063 / MR-1).